Reading from the N-terminus, the 244-residue chain is Small ribosomal subunit protein eS4 (244 aa).

The S4 RNA-binding domain occupies 43-106 (LPLLLVVRDI…DENYLVLFDE (64 aa)).

This sequence belongs to the eukaryotic ribosomal protein eS4 family.

This chain is Small ribosomal subunit protein eS4, found in Methanococcus maripaludis (strain C6 / ATCC BAA-1332).